Reading from the N-terminus, the 477-residue chain is Bifunctional protein HldE (477 aa).

A ribokinase region spans residues 1–318; sequence MKVTLPEFER…ENAVRGRADT (318 aa). Residue lysine 179 is modified to N6-acetyllysine. Residue 195–198 participates in ATP binding; the sequence is NLSE. Aspartate 264 is an active-site residue. A cytidylyltransferase region spans residues 344–477; it reads MTNGVFDILH…IKKIQQDKKG (134 aa).

The protein in the N-terminal section; belongs to the carbohydrate kinase PfkB family. It in the C-terminal section; belongs to the cytidylyltransferase family. Homodimer.

It carries out the reaction D-glycero-beta-D-manno-heptose 7-phosphate + ATP = D-glycero-beta-D-manno-heptose 1,7-bisphosphate + ADP + H(+). It catalyses the reaction D-glycero-beta-D-manno-heptose 1-phosphate + ATP + H(+) = ADP-D-glycero-beta-D-manno-heptose + diphosphate. It functions in the pathway nucleotide-sugar biosynthesis; ADP-L-glycero-beta-D-manno-heptose biosynthesis; ADP-L-glycero-beta-D-manno-heptose from D-glycero-beta-D-manno-heptose 7-phosphate: step 1/4. It participates in nucleotide-sugar biosynthesis; ADP-L-glycero-beta-D-manno-heptose biosynthesis; ADP-L-glycero-beta-D-manno-heptose from D-glycero-beta-D-manno-heptose 7-phosphate: step 3/4. In terms of biological role, catalyzes the phosphorylation of D-glycero-D-manno-heptose 7-phosphate at the C-1 position to selectively form D-glycero-beta-D-manno-heptose-1,7-bisphosphate. Functionally, catalyzes the ADP transfer from ATP to D-glycero-beta-D-manno-heptose 1-phosphate, yielding ADP-D-glycero-beta-D-manno-heptose. This is Bifunctional protein HldE from Shigella sonnei (strain Ss046).